A 167-amino-acid polypeptide reads, in one-letter code: Sulfopyruvate decarboxylase subunit alpha (167 aa).

Belongs to the ComD family. As to quaternary structure, heterododecamer composed of 6 subunits alpha and 6 subunits beta.

The enzyme catalyses 3-sulfopyruvate + H(+) = sulfoacetaldehyde + CO2. The protein operates within cofactor biosynthesis; coenzyme M biosynthesis; sulfoacetaldehyde from phosphoenolpyruvate and sulfite: step 4/4. In terms of biological role, involved in the biosynthesis of the coenzyme M (2-mercaptoethanesulfonic acid). Catalyzes the decarboxylation of sulfopyruvate to sulfoacetaldehyde. The chain is Sulfopyruvate decarboxylase subunit alpha (comD) from Methanococcus maripaludis (strain DSM 14266 / JCM 13030 / NBRC 101832 / S2 / LL).